A 783-amino-acid polypeptide reads, in one-letter code: Cilia- and flagella-associated protein 91 (783 aa).

Positions 748–760 (EDFELEEEAESLD) are enriched in acidic residues. Residues 748–783 (EDFELEEEAESLDSEVPTVSVSKTSTIKPTQDEGEG) form a disordered region. A compositionally biased stretch (polar residues) spans 764-776 (PTVSVSKTSTIKP).

The protein belongs to the CFAP91 family. In terms of assembly, part of a complex containing MYCBP, AKAP1 and PRKAR2B. Interacts with MYCBP and AKAP1. Interacts with CFAP61. In terms of processing, phosphorylated by PKA. Expressed in the testis, in cells involved in spermatogenesis.

It localises to the cytoplasm. Its subcellular location is the mitochondrion. The protein localises to the cytoskeleton. The protein resides in the cilium axoneme. Its function is as follows. Involved in sperm flagellum axonemal organization and function. May regulate cilium motility through its role in the assembly of the axonemal radial spokes. The chain is Cilia- and flagella-associated protein 91 from Mus musculus (Mouse).